Reading from the N-terminus, the 368-residue chain is MSAFQPTIKRRESTKIYVGNVPIGGDAPIAVQSMTNTRTTDVEATVAQIKSLERVGADIVRVSVPTMDAAEAFKQIKQQVNVPLVADIHFDYRIALKVAEYGVDCLRINPGNIGREDRVRAVVDCARDKNIPIRIGVNAGSLEKDLQEKYGEPTPEALLESALRHVEILDRLNFDQFKVSVKASDVFLAVESYRLLAKAIKQPLHLGITEAGGARAGAVKSAVGLGMLLAEGIGDTLRISLAADPIEEIKVGFDILKSLRIRSRGINFIACPTCSRQEFDVIGTVNALEQRLEDIITPMDVSIIGCVVNGPGEALISDLGVTGGNKKSGYYLDGERQKERFDNEDIVNQLEAKIRAKVARQDPKNRII.

Cys-271, Cys-274, Cys-306, and Glu-313 together coordinate [4Fe-4S] cluster.

It belongs to the IspG family. It depends on [4Fe-4S] cluster as a cofactor.

It carries out the reaction (2E)-4-hydroxy-3-methylbut-2-enyl diphosphate + oxidized [flavodoxin] + H2O + 2 H(+) = 2-C-methyl-D-erythritol 2,4-cyclic diphosphate + reduced [flavodoxin]. The protein operates within isoprenoid biosynthesis; isopentenyl diphosphate biosynthesis via DXP pathway; isopentenyl diphosphate from 1-deoxy-D-xylulose 5-phosphate: step 5/6. Converts 2C-methyl-D-erythritol 2,4-cyclodiphosphate (ME-2,4cPP) into 1-hydroxy-2-methyl-2-(E)-butenyl 4-diphosphate. The protein is 4-hydroxy-3-methylbut-2-en-1-yl diphosphate synthase (flavodoxin) of Haemophilus influenzae (strain PittGG).